The primary structure comprises 354 residues: MTVLKNDRFLRALMRQPVDQTPVWMMRQAGRYLPEYRATRAQAGDFMGLCTNPERACEVTLQPLERYPLDAAILFSDILTIPDAMGLGLYFETGEGPKFKKTISTAADIEKLEVIKPLQDLPYVMDAVSTIRRELNGRVPLIGFSGSPWTLATYMVEGGSSKDFQKTKALIYNHPEAAAQLMDKLADSVIAYLNAQIDAGAQAVQIFDSWGGALSHDAYKTFSLAPMAKIVKGLKRENEGRKVPVILFTKGGGQWLEAMADAGADCLGLDWTTDIGQARARVGDKVALQGNMDPSILYASPDRIREEVARILASYGAGTGHVFNLGHGITPGVDPEHAGAFIRAVGELSAQYHK.

Residues 27 to 31 (RQAGR), Asp77, Tyr154, Ser209, and His327 each bind substrate.

This sequence belongs to the uroporphyrinogen decarboxylase family. Homodimer.

It is found in the cytoplasm. It catalyses the reaction uroporphyrinogen III + 4 H(+) = coproporphyrinogen III + 4 CO2. The protein operates within porphyrin-containing compound metabolism; protoporphyrin-IX biosynthesis; coproporphyrinogen-III from 5-aminolevulinate: step 4/4. Its function is as follows. Catalyzes the decarboxylation of four acetate groups of uroporphyrinogen-III to yield coproporphyrinogen-III. This is Uroporphyrinogen decarboxylase from Saccharophagus degradans (strain 2-40 / ATCC 43961 / DSM 17024).